The primary structure comprises 578 residues: Multidrug resistance-like ATP-binding protein MdlB (578 aa).

The ABC transmembrane type-1 domain maps to leucine 25 to glutamine 308. The next 6 helical transmembrane spans lie at isoleucine 26 to isoleucine 46, valine 59 to leucine 79, serine 143 to tryptophan 163, alanine 166 to phenylalanine 186, valine 196 to glutamine 216, and leucine 260 to glycine 280. An ABC transporter domain is found at isoleucine 339 to serine 573. Glycine 373 to serine 380 contributes to the ATP binding site.

It belongs to the ABC transporter superfamily. Drug exporter-2 (TC 3.A.1.117) family.

The protein localises to the cell membrane. It catalyses the reaction ATP + H2O + xenobioticSide 1 = ADP + phosphate + xenobioticSide 2.. In Buchnera aphidicola subsp. Baizongia pistaciae (strain Bp), this protein is Multidrug resistance-like ATP-binding protein MdlB (mdlB).